Here is a 602-residue protein sequence, read N- to C-terminus: Beta-(1--&gt;2)glucan export ATP-binding/permease protein NdvA (602 aa).

The ABC transmembrane type-1 domain occupies 21–306; sequence GWLLAFANLL…VVSFINNVFM (286 aa). The next 6 helical transmembrane spans lie at 22-42, 63-83, 141-161, 163-183, 240-262, and 280-300; these read WLLAFANLLLAASQFAEPVLF, FLAAWVAFGLFTIACSALVAL, EHFAAILSVVVLLPLSLYLNW, LAILLFVLCIVFTALTTFVVR, VLSWWALVTVITRASTTITVLAI, and IVMFVSFATLLIQKLEQVVSF. The region spanning 340 to 573 is the ABC transporter domain; the sequence is VEFNDVTFSY…GGHFAELARA (234 aa). 373 to 380 is a binding site for ATP; that stretch reads GPTGAGKS.

The protein belongs to the ABC transporter superfamily. Beta-(1--&gt;2)glucan exporter (TC 3.A.1.108.1) family. In terms of assembly, homodimer.

The protein resides in the cell inner membrane. The enzyme catalyses [(1-&gt;2)-beta-D-glucosyl](n)(in) + ATP + H2O = [(1-&gt;2)-beta-D-glucosyl](n)(out) + ADP + phosphate + H(+). Functionally, involved in beta-(1--&gt;2)glucan export. Transmembrane domains (TMD) form a pore in the inner membrane and the ATP-binding domain (NBD) is responsible for energy generation. This chain is Beta-(1--&gt;2)glucan export ATP-binding/permease protein NdvA, found in Bradyrhizobium diazoefficiens (strain JCM 10833 / BCRC 13528 / IAM 13628 / NBRC 14792 / USDA 110).